The chain runs to 211 residues: Protein-L-isoaspartate O-methyltransferase (211 aa).

Ser-62 is an active-site residue.

This sequence belongs to the methyltransferase superfamily. L-isoaspartyl/D-aspartyl protein methyltransferase family.

It localises to the cytoplasm. The enzyme catalyses [protein]-L-isoaspartate + S-adenosyl-L-methionine = [protein]-L-isoaspartate alpha-methyl ester + S-adenosyl-L-homocysteine. Functionally, catalyzes the methyl esterification of L-isoaspartyl residues in peptides and proteins that result from spontaneous decomposition of normal L-aspartyl and L-asparaginyl residues. It plays a role in the repair and/or degradation of damaged proteins. The chain is Protein-L-isoaspartate O-methyltransferase from Shewanella amazonensis (strain ATCC BAA-1098 / SB2B).